The following is a 344-amino-acid chain: sn-glycerol-3-phosphate import ATP-binding protein UgpC 2 (344 aa).

One can recognise an ABC transporter domain in the interval 4–234; it reads IELIDLKKNY…PETVFVAGFI (231 aa). Residue 36-43 participates in ATP binding; it reads GPSGCGKS.

It belongs to the ABC transporter superfamily. sn-glycerol-3-phosphate importer (TC 3.A.1.1.3) family. The complex is composed of two ATP-binding proteins (UgpC), two transmembrane proteins (UgpA and UgpE) and a solute-binding protein (UgpB).

The protein localises to the cell inner membrane. It carries out the reaction sn-glycerol 3-phosphate(out) + ATP + H2O = sn-glycerol 3-phosphate(in) + ADP + phosphate + H(+). Functionally, part of the ABC transporter complex UgpBAEC involved in sn-glycerol-3-phosphate (G3P) import. Responsible for energy coupling to the transport system. The chain is sn-glycerol-3-phosphate import ATP-binding protein UgpC 2 from Rhizobium johnstonii (strain DSM 114642 / LMG 32736 / 3841) (Rhizobium leguminosarum bv. viciae).